The sequence spans 235 residues: Large ribosomal subunit protein uL1 (235 aa).

It belongs to the universal ribosomal protein uL1 family. Part of the 50S ribosomal subunit.

Its function is as follows. Binds directly to 23S rRNA. The L1 stalk is quite mobile in the ribosome, and is involved in E site tRNA release. In terms of biological role, protein L1 is also a translational repressor protein, it controls the translation of the L11 operon by binding to its mRNA. This Mycobacterium tuberculosis (strain ATCC 25177 / H37Ra) protein is Large ribosomal subunit protein uL1.